Reading from the N-terminus, the 332-residue chain is Ribosomal RNA small subunit methyltransferase C (332 aa).

This sequence belongs to the methyltransferase superfamily. RsmC family. Monomer.

The protein resides in the cytoplasm. The catalysed reaction is guanosine(1207) in 16S rRNA + S-adenosyl-L-methionine = N(2)-methylguanosine(1207) in 16S rRNA + S-adenosyl-L-homocysteine + H(+). Its function is as follows. Specifically methylates the guanine in position 1207 of 16S rRNA in the 30S particle. The protein is Ribosomal RNA small subunit methyltransferase C of Pseudomonas paraeruginosa (strain DSM 24068 / PA7) (Pseudomonas aeruginosa (strain PA7)).